A 625-amino-acid polypeptide reads, in one-letter code: tRNA uridine 5-carboxymethylaminomethyl modification enzyme MnmG (625 aa).

Residue 14 to 19 (GAGHAG) participates in FAD binding. 273-287 (GPRYCPSIEDKIVRF) serves as a coordination point for NAD(+).

It belongs to the MnmG family. Homodimer. Heterotetramer of two MnmE and two MnmG subunits. The cofactor is FAD.

It localises to the cytoplasm. Its function is as follows. NAD-binding protein involved in the addition of a carboxymethylaminomethyl (cmnm) group at the wobble position (U34) of certain tRNAs, forming tRNA-cmnm(5)s(2)U34. This Clostridium botulinum (strain Okra / Type B1) protein is tRNA uridine 5-carboxymethylaminomethyl modification enzyme MnmG.